A 328-amino-acid chain; its full sequence is Extracellular exo-alpha-(1-&gt;5)-L-arabinofuranosidase (328 aa).

The segment at residues 1–43 (MCTREAVRMSREHDLPEIPSRRLLLKGAAAAGALTAVPGVAHA) is a signal peptide (tat-tyPE signal). Residue aspartate 60 is the Proton acceptor of the active site. The Proton donor role is filled by glutamate 236.

This sequence belongs to the glycosyl hydrolase 43 family. Post-translationally, predicted to be exported by the Tat system. The position of the signal peptide cleavage has been experimentally proven.

It localises to the secreted. The catalysed reaction is Hydrolysis of terminal non-reducing alpha-L-arabinofuranoside residues in alpha-L-arabinosides.. It functions in the pathway glycan metabolism; L-arabinan degradation. Its function is as follows. Involved in the degradation of arabinan and is a key enzyme in the complete degradation of the plant cell wall. Catalyzes only the cleavage of terminal alpha-(1-&gt;5) arabinofuranosyl bonds of arabinan present in the arabinofuranosyl polysaccharides or oligosaccharides. It cannot act on other arabinose-containing polysaccharides and arabinoxylo-oligosaccharides. This is Extracellular exo-alpha-(1-&gt;5)-L-arabinofuranosidase from Streptomyces chartreusis.